The sequence spans 375 residues: MSTAGKVIKCRAAVLWEKNKPFSIEEVEVVPPKAYEVRIKIVATGICRSDDHVVNGSIITPLPAILGHEAGGIVESIGEGVTTVKPGDKVIPLFVPQCGKCRACKHPESNLCTHGDLGRAQGTLMDGTSRFTCKGKPIHHFLGVTTFSEYTVVSEISVTKIDAASPLEKVCLIGCGFSTGYGSAVKVGKVARGSICSCVWSGRVGLSAIIGCKAAGAARIIAVDINKDKFAKAKELGATECVNPQDYDKPIYQVLQEMTDGGVDFSFEVIGRLDTMVSALMCCQESHGVSVIVGVPPNAQSLTMDPMVLLSGRSWKGAVFGGYKGKDDVPKLVADFMAKKFPLEPLITNVFPFAKINEGFDLLRAGKSIRTVLTF.

Ser-2 carries the post-translational modification N-acetylserine. Zn(2+)-binding residues include Cys-47, His-68, Cys-98, Cys-101, Cys-104, Cys-112, and Cys-175. NAD(+) is bound by residues 200–205, Asp-224, and Lys-229; that span reads WSGRVG. Lys-234 is subject to N6-succinyllysine. Residue 293-295 coordinates NAD(+); that stretch reads VGV. Lys-340 is subject to N6-succinyllysine. Residue Arg-370 participates in NAD(+) binding.

Belongs to the zinc-containing alcohol dehydrogenase family. Class-I subfamily. As to quaternary structure, homodimer. Zn(2+) serves as cofactor.

The protein resides in the cytoplasm. The enzyme catalyses a primary alcohol + NAD(+) = an aldehyde + NADH + H(+). The catalysed reaction is a secondary alcohol + NAD(+) = a ketone + NADH + H(+). This Geomys knoxjonesi (Jones' pocket gopher) protein is Alcohol dehydrogenase 1 (ADH1).